The sequence spans 699 residues: Polyribonucleotide nucleotidyltransferase (699 aa).

Residues Asp-485 and Asp-491 each contribute to the Mg(2+) site. Residues 552-611 enclose the KH domain; sequence PRITTIKINPEKIRDVIGKGGAVIRALTEETGTTIELEDDGTVKIASSNGEATKEAIRRI. The 69-residue stretch at 621-689 folds into the S1 motif domain; that stretch reads GRIYNGKVIR…RQGRVRLSIK (69 aa).

The protein belongs to the polyribonucleotide nucleotidyltransferase family. Component of the RNA degradosome, which is a multiprotein complex involved in RNA processing and mRNA degradation. Requires Mg(2+) as cofactor.

Its subcellular location is the cytoplasm. It carries out the reaction RNA(n+1) + phosphate = RNA(n) + a ribonucleoside 5'-diphosphate. Functionally, involved in mRNA degradation. Catalyzes the phosphorolysis of single-stranded polyribonucleotides processively in the 3'- to 5'-direction. In Shewanella oneidensis (strain ATCC 700550 / JCM 31522 / CIP 106686 / LMG 19005 / NCIMB 14063 / MR-1), this protein is Polyribonucleotide nucleotidyltransferase.